A 368-amino-acid polypeptide reads, in one-letter code: p21-activated protein kinase-interacting protein 1-like (368 aa).

5 WD repeats span residues 45 to 82, 85 to 123, 126 to 165, 207 to 245, and 248 to 289; these read AHTASLNAVSSSNQFIATGSKDETIQLYDMCKKTEHGA, HHDGTISCLEFYGTSHLLSGGQDGLICVWSTKKWECLKT, AHKGQVTSLSVHPSGKLALSVGTDKTLRTWNLIEGRSAFI, AFTKRISCLKFLKNSLLAVGGDDESVRIYDVTSQKCVCE, and AHEN…IESP.

Its subcellular location is the nucleus. The protein resides in the nucleolus. Its function is as follows. Negatively regulates the PAK1 kinase. PAK1 is a member of the PAK kinase family, which has been shown to play a positive role in the regulation of signaling pathways involving MAPK8 and RELA. PAK1 exists as an inactive homodimer, which is activated by binding of small GTPases such as CDC42 to an N-terminal regulatory domain. PAK1IP1 also binds to the N-terminus of PAK1, and inhibits the specific activation of PAK1 by CDC42. May be involved in ribosomal large subunit assembly. This Danio rerio (Zebrafish) protein is p21-activated protein kinase-interacting protein 1-like (pak1ip1).